We begin with the raw amino-acid sequence, 607 residues long: Glutamine--fructose-6-phosphate aminotransferase [isomerizing] (607 aa).

The active-site Nucleophile; for GATase activity is Cys-2. The Glutamine amidotransferase type-2 domain maps to 2–217 (CGIIGIIGRE…EGDWVVLTRE (216 aa)). SIS domains are found at residues 283–422 (PDFD…VKGQ) and 455–597 (VATA…VDQP). Lys-602 functions as the For Fru-6P isomerization activity in the catalytic mechanism.

In terms of assembly, homodimer.

It is found in the cytoplasm. The catalysed reaction is D-fructose 6-phosphate + L-glutamine = D-glucosamine 6-phosphate + L-glutamate. Functionally, catalyzes the first step in hexosamine metabolism, converting fructose-6P into glucosamine-6P using glutamine as a nitrogen source. The protein is Glutamine--fructose-6-phosphate aminotransferase [isomerizing] of Zymomonas mobilis subsp. mobilis (strain ATCC 31821 / ZM4 / CP4).